The following is a 631-amino-acid chain: E3 ubiquitin-protein ligase Zswim2 (631 aa).

The SWIM-type zinc finger occupies 54–87; the sequence is FRVLLGNPHECSCPTFLKRGELCKHICWVLLKKF. Residues 139–348 are UBE2D1-binding; it reads KDINAGDICP…APGYQCRLCL (210 aa). The RING-type 1 zinc-finger motif lies at 147–199; it reads CPICQEVLLEKKLPVTFCRFGCGNNVHIKCMRILANYQDTGSDSSVLRCPLCR. The segment at 230–281 adopts a ZZ-type zinc-finger fold; it reads HLGIPCNNCNQLPIEGRCYKCTECVEYHLCQECFDSCCHSSHAFASREKRNQ. The Zn(2+) site is built by C235, C238, C250, C253, C259, C262, H268, and H271. The RING-type 2 zinc finger occupies 344 to 386; sequence CRLCLKSFSFGQYTRLLPCTHKFHRKCIDNWLLHKCNSCPIDR. The segment at 589-614 is disordered; sequence SKRQNNSMGKVRQKLGHPPRRPAYPP. The span at 599–608 shows a compositional bias: basic residues; it reads VRQKLGHPPR.

Dimer. Interacts with UBE2D1. Post-translationally, polyubiquitinated. Polyubiquitination is followed by degradation via the proteasome. Expressed only in testis.

It catalyses the reaction S-ubiquitinyl-[E2 ubiquitin-conjugating enzyme]-L-cysteine + [acceptor protein]-L-lysine = [E2 ubiquitin-conjugating enzyme]-L-cysteine + N(6)-ubiquitinyl-[acceptor protein]-L-lysine.. Functionally, E3 ubiquitin-protein ligase involved in the regulation of Fas-, DR3- and DR4-mediated apoptosis. Functions in conjunction with the UBE2D1, UBE2D3 and UBE2E1 E2 ubiquitin-conjugating enzymes. This Mus musculus (Mouse) protein is E3 ubiquitin-protein ligase Zswim2 (Zswim2).